The chain runs to 287 residues: Glycine--tRNA ligase alpha subunit (287 aa).

This sequence belongs to the class-II aminoacyl-tRNA synthetase family. Tetramer of two alpha and two beta subunits.

The protein resides in the cytoplasm. It catalyses the reaction tRNA(Gly) + glycine + ATP = glycyl-tRNA(Gly) + AMP + diphosphate. In Campylobacter jejuni subsp. jejuni serotype O:6 (strain 81116 / NCTC 11828), this protein is Glycine--tRNA ligase alpha subunit.